Reading from the N-terminus, the 193-residue chain is Xanthine phosphoribosyltransferase (193 aa).

2 residues coordinate xanthine: Leu-20 and Thr-27. 128 to 132 (ANGQA) provides a ligand contact to 5-phospho-alpha-D-ribose 1-diphosphate. Residue Lys-156 coordinates xanthine.

Belongs to the purine/pyrimidine phosphoribosyltransferase family. Xpt subfamily. Homodimer.

The protein resides in the cytoplasm. The catalysed reaction is XMP + diphosphate = xanthine + 5-phospho-alpha-D-ribose 1-diphosphate. Its pathway is purine metabolism; XMP biosynthesis via salvage pathway; XMP from xanthine: step 1/1. Converts the preformed base xanthine, a product of nucleic acid breakdown, to xanthosine 5'-monophosphate (XMP), so it can be reused for RNA or DNA synthesis. This Streptococcus agalactiae serotype Ia (strain ATCC 27591 / A909 / CDC SS700) protein is Xanthine phosphoribosyltransferase.